We begin with the raw amino-acid sequence, 217 residues long: MQDTTLHIRHLGKQDYESVWHAMQHYTDTRDSESHDELWIVEHPPVFTQGQAGKSEHILNAGDIPVIQVDRGGQVTYHGPGQLVVYPLLDIKRSKVGVRQLVTHIEQSIVDMLAKYDINAYAKADAPGVYVDERKIASLGLRIRKGCSFHGLALNVDMDLAPFRRINPCGYAGLEMAQCKALGGPQTVIEAGEQLTITFSQLLGYQHLVHHQGLAAS.

The BPL/LPL catalytic domain maps to 32–207 (SESHDELWIV…TFSQLLGYQH (176 aa)). Residues 71–78 (RGGQVTYH), 138–140 (SLG), and 151–153 (GLA) contribute to the substrate site. The Acyl-thioester intermediate role is filled by cysteine 169.

This sequence belongs to the LipB family.

It is found in the cytoplasm. It carries out the reaction octanoyl-[ACP] + L-lysyl-[protein] = N(6)-octanoyl-L-lysyl-[protein] + holo-[ACP] + H(+). The protein operates within protein modification; protein lipoylation via endogenous pathway; protein N(6)-(lipoyl)lysine from octanoyl-[acyl-carrier-protein]: step 1/2. In terms of biological role, catalyzes the transfer of endogenously produced octanoic acid from octanoyl-acyl-carrier-protein onto the lipoyl domains of lipoate-dependent enzymes. Lipoyl-ACP can also act as a substrate although octanoyl-ACP is likely to be the physiological substrate. This Shewanella baltica (strain OS223) protein is Octanoyltransferase.